The chain runs to 327 residues: Ribose operon repressor (327 aa).

In terms of domain architecture, HTH lacI-type spans 1-56 (MTTIKQVALEAGVSKSTVSRFIAQNGYVSDEAREKIERAIKKLNFRPNLSAQSLKT). A DNA-binding region (H-T-H motif) is located at residues 4 to 23 (IKQVALEAGVSKSTVSRFIA).

Transcriptional repressor for the ribose rbsDACBK operon. This is Ribose operon repressor (rbsR) from Lactococcus lactis subsp. lactis (strain IL1403) (Streptococcus lactis).